A 317-amino-acid polypeptide reads, in one-letter code: Olfactory receptor 2G2 (317 aa).

Residues 1-28 are Extracellular-facing; that stretch reads MGMVRHTNESNLAGFILLGFSDYPQLQK. An N-linked (GlcNAc...) asparagine glycan is attached at Asn8. A helical transmembrane segment spans residues 29 to 52; it reads VLFVLILILYLLTILGNTTIILVS. At 53-60 the chain is on the cytoplasmic side; sequence RLEPKLHM. The chain crosses the membrane as a helical span at residues 61 to 82; the sequence is PMYFFLSHLSFLYRCFTSSVIP. At 83-103 the chain is on the extracellular side; that stretch reads QLLVNLWEPMKTIAYGGCLVH. Cys100 and Cys192 are oxidised to a cystine. A helical membrane pass occupies residues 104–123; the sequence is LYNSHALGSTECVLPAVMSC. The Cytoplasmic portion of the chain corresponds to 124 to 142; sequence DRYVAVCRPLHYTVLMHIH. A helical membrane pass occupies residues 143–161; sequence LCMALASMAWLSGIATTLV. Over 162–198 the chain is Extracellular; the sequence is QSTLTLQLPFCGHRQVDHFICEVPVLIKLACVGTTFN. A helical transmembrane segment spans residues 199-222; it reads EAELFVASILFLIVPVSFILVSSG. Residues 223–239 are Cytoplasmic-facing; the sequence is YIAHAVLRIKSATRRQK. The chain crosses the membrane as a helical span at residues 240–262; the sequence is AFGTCFSHLTVVTIFYGTIIFMY. The Extracellular segment spans residues 263-275; sequence LQPAKSRSRDQGK. The chain crosses the membrane as a helical span at residues 276 to 295; it reads FVSLFYTVVTRMLNPLIYTL. At 296-317 the chain is on the cytoplasmic side; the sequence is RIKEVKGALKKVLAKALGVNIL.

Belongs to the G-protein coupled receptor 1 family.

Its subcellular location is the cell membrane. Functionally, odorant receptor. This is Olfactory receptor 2G2 (OR2G2) from Homo sapiens (Human).